The chain runs to 245 residues: Ribonuclease 3 (245 aa).

Residues 19–148 (FRAFQQKLGI…FIGALYLDQG (130 aa)) enclose the RNase III domain. Residue glutamate 61 coordinates Mg(2+). Aspartate 65 is a catalytic residue. Aspartate 134 and glutamate 137 together coordinate Mg(2+). Glutamate 137 is an active-site residue. The 70-residue stretch at 174–243 (DYKSQLQELI…AAEALRKLKE (70 aa)) folds into the DRBM domain.

This sequence belongs to the ribonuclease III family. As to quaternary structure, homodimer. Mg(2+) serves as cofactor.

It localises to the cytoplasm. The catalysed reaction is Endonucleolytic cleavage to 5'-phosphomonoester.. Its function is as follows. Digests double-stranded RNA. Involved in the processing of primary rRNA transcript to yield the immediate precursors to the large and small rRNAs (23S and 16S). Processes some mRNAs, and tRNAs when they are encoded in the rRNA operon. Processes pre-crRNA and tracrRNA of type II CRISPR loci if present in the organism. The polypeptide is Ribonuclease 3 (Bacillus cytotoxicus (strain DSM 22905 / CIP 110041 / 391-98 / NVH 391-98)).